Here is a 489-residue protein sequence, read N- to C-terminus: Rhamnulokinase (489 aa).

13–17 contributes to the ATP binding site; the sequence is ASSGR. Cysteine 68 and cysteine 222 are joined by a disulfide. Substrate-binding positions include glycine 83 and 236-238; that span reads HDT. Aspartate 237 functions as the Proton acceptor in the catalytic mechanism. Residue threonine 259 participates in ATP binding. Asparagine 296 lines the substrate pocket. Glutamine 304 serves as a coordination point for ATP. A disulfide bridge connects residues cysteine 353 and cysteine 370. Glycine 402 provides a ligand contact to ATP. Cysteine 413 and cysteine 417 are disulfide-bonded.

The protein belongs to the rhamnulokinase family. Mg(2+) serves as cofactor.

The catalysed reaction is L-rhamnulose + ATP = L-rhamnulose 1-phosphate + ADP + H(+). It functions in the pathway carbohydrate degradation; L-rhamnose degradation; glycerone phosphate from L-rhamnose: step 2/3. Its function is as follows. Involved in the catabolism of L-rhamnose (6-deoxy-L-mannose). Catalyzes the transfer of the gamma-phosphate group from ATP to the 1-hydroxyl group of L-rhamnulose to yield L-rhamnulose 1-phosphate. This chain is Rhamnulokinase, found in Salmonella choleraesuis (strain SC-B67).